Consider the following 219-residue polypeptide: Phosphatidylserine decarboxylase proenzyme (219 aa).

Ser188 (schiff-base intermediate with substrate; via pyruvic acid) is an active-site residue. Residue Ser188 is modified to Pyruvic acid (Ser); by autocatalysis.

It belongs to the phosphatidylserine decarboxylase family. PSD-A subfamily. In terms of assembly, heterodimer of a large membrane-associated beta subunit and a small pyruvoyl-containing alpha subunit. Pyruvate is required as a cofactor. Is synthesized initially as an inactive proenzyme. Formation of the active enzyme involves a self-maturation process in which the active site pyruvoyl group is generated from an internal serine residue via an autocatalytic post-translational modification. Two non-identical subunits are generated from the proenzyme in this reaction, and the pyruvate is formed at the N-terminus of the alpha chain, which is derived from the carboxyl end of the proenzyme. The post-translation cleavage follows an unusual pathway, termed non-hydrolytic serinolysis, in which the side chain hydroxyl group of the serine supplies its oxygen atom to form the C-terminus of the beta chain, while the remainder of the serine residue undergoes an oxidative deamination to produce ammonia and the pyruvoyl prosthetic group on the alpha chain.

Its subcellular location is the cell membrane. It catalyses the reaction a 1,2-diacyl-sn-glycero-3-phospho-L-serine + H(+) = a 1,2-diacyl-sn-glycero-3-phosphoethanolamine + CO2. Its pathway is phospholipid metabolism; phosphatidylethanolamine biosynthesis; phosphatidylethanolamine from CDP-diacylglycerol: step 2/2. Functionally, catalyzes the formation of phosphatidylethanolamine (PtdEtn) from phosphatidylserine (PtdSer). The polypeptide is Phosphatidylserine decarboxylase proenzyme (Trichlorobacter lovleyi (strain ATCC BAA-1151 / DSM 17278 / SZ) (Geobacter lovleyi)).